A 182-amino-acid chain; its full sequence is ATP synthase subunit delta (182 aa).

It belongs to the ATPase delta chain family. In terms of assembly, F-type ATPases have 2 components, F(1) - the catalytic core - and F(0) - the membrane proton channel. F(1) has five subunits: alpha(3), beta(3), gamma(1), delta(1), epsilon(1). F(0) has three main subunits: a(1), b(2) and c(10-14). The alpha and beta chains form an alternating ring which encloses part of the gamma chain. F(1) is attached to F(0) by a central stalk formed by the gamma and epsilon chains, while a peripheral stalk is formed by the delta and b chains.

The protein resides in the cell inner membrane. Functionally, f(1)F(0) ATP synthase produces ATP from ADP in the presence of a proton or sodium gradient. F-type ATPases consist of two structural domains, F(1) containing the extramembraneous catalytic core and F(0) containing the membrane proton channel, linked together by a central stalk and a peripheral stalk. During catalysis, ATP synthesis in the catalytic domain of F(1) is coupled via a rotary mechanism of the central stalk subunits to proton translocation. This protein is part of the stalk that links CF(0) to CF(1). It either transmits conformational changes from CF(0) to CF(1) or is implicated in proton conduction. This is ATP synthase subunit delta from Histophilus somni (strain 129Pt) (Haemophilus somnus).